The chain runs to 210 residues: Glycerol-3-phosphate acyltransferase 2 (210 aa).

Transmembrane regions (helical) follow at residues 4–24 (LIMV…PAPY), 52–72 (VGFW…ALAM), 73–93 (AVAN…LMAI), 114–134 (IGIL…CFLI), 141–161 (FPTL…WLGQ), and 163–183 (DMGK…MYIP).

The protein belongs to the PlsY family. Probably interacts with PlsX.

Its subcellular location is the cell membrane. It carries out the reaction an acyl phosphate + sn-glycerol 3-phosphate = a 1-acyl-sn-glycero-3-phosphate + phosphate. It functions in the pathway lipid metabolism; phospholipid metabolism. Functionally, catalyzes the transfer of an acyl group from acyl-phosphate (acyl-PO(4)) to glycerol-3-phosphate (G3P) to form lysophosphatidic acid (LPA). This enzyme utilizes acyl-phosphate as fatty acyl donor, but not acyl-CoA or acyl-ACP. The protein is Glycerol-3-phosphate acyltransferase 2 of Dehalococcoides mccartyi (strain CBDB1).